Reading from the N-terminus, the 425-residue chain is Elongation factor 1-alpha (425 aa).

The 217-residue stretch at 5–221 folds into the tr-type G domain; it reads KPHMNLAVIG…DTFKEPSKPT (217 aa). Residues 14-21 form a G1 region; it reads GHIDHGKS. 14 to 21 lines the GTP pocket; sequence GHIDHGKS. Serine 21 provides a ligand contact to Mg(2+). The segment at 70-74 is G2; it reads GITID. The segment at 91–94 is G3; sequence DCPG. GTP-binding positions include 91 to 95 and 146 to 149; these read DCPGH and NKMD. The interval 146 to 149 is G4; it reads NKMD. Residues 185–187 are G5; it reads SSL.

The protein belongs to the TRAFAC class translation factor GTPase superfamily. Classic translation factor GTPase family. EF-Tu/EF-1A subfamily.

The protein localises to the cytoplasm. The catalysed reaction is GTP + H2O = GDP + phosphate + H(+). GTP hydrolase that promotes the GTP-dependent binding of aminoacyl-tRNA to the A-site of ribosomes during protein biosynthesis. The sequence is that of Elongation factor 1-alpha from Methanoregula boonei (strain DSM 21154 / JCM 14090 / 6A8).